Here is a 607-residue protein sequence, read N- to C-terminus: MLLKELSSLASPLSQSQVDKLKQLTAELNSVQLAWVSGYLAATANTSGSAIQVAASVTEAQAAQTVTILYGSQTGNGRGIAKALAEKAKTQGYSVNLASMGEYNVRQLKQETLLLLVVSTHGEGEAPDDAIELHKFLATKRAPQLNNLHYSVLALGDSSYEFFCQTGKDFDARLSALGAKALLPLVECDVDYEAAAGQWHADVLTAVKPLIQTTANVVALNEINSTSAQVASESEFTKQNPYRAEVLVSQKITGRDSDRDVRHVEIDLGESGLHYEVGDALGVWFSNSEILVGEILAGLGLAADAKVTVGSESISLKQALIDKKELTQLYPGLVKAWAELSASSELLALSEDKEQLRQFILNHQFVDLVTNYKLPAEANLDANKLLELLRPLTPRLYSIASSQTEVDTEVHLTVALVEDEHQGQTRFGGASHFLASAQEGAEVKVYVEPNKHFRLPENPDTPVIMIGPGTGVAPFRAFMQERVAQGAKGDSWLFFGNPHFEQDFLYQTEWQQYLKNGDLTRIDVAFSRDQAHKIYVQHRIKEQGQALWQWLQNGAHLYICGDAERMAKDVHQALLAVAVEFGGLSSEAAEEYFETLRSHKRYQKDVY.

The Flavodoxin-like domain maps to 66 to 204 (VTILYGSQTG…AAGQWHADVL (139 aa)). Residues 72–77 (SQTGNG), 119–122 (STHG), and 155–164 (LGDSSYEFFC) contribute to the FMN site. One can recognise an FAD-binding FR-type domain in the interval 239-456 (QNPYRAEVLV…VEPNKHFRLP (218 aa)). Residues Thr-327, Leu-361, 395–398 (RLYS), 413–415 (TVA), and 428–431 (GGAS) each bind FAD. NADP(+) is bound by residues 527 to 528 (SR), 533 to 537 (KIYVQ), and Asp-569. Residue Tyr-607 coordinates FAD.

Belongs to the NADPH-dependent sulphite reductase flavoprotein subunit CysJ family. This sequence in the N-terminal section; belongs to the flavodoxin family. The protein in the C-terminal section; belongs to the flavoprotein pyridine nucleotide cytochrome reductase family. In terms of assembly, alpha(8)-beta(8). The alpha component is a flavoprotein, the beta component is a hemoprotein. FAD serves as cofactor. The cofactor is FMN.

The enzyme catalyses hydrogen sulfide + 3 NADP(+) + 3 H2O = sulfite + 3 NADPH + 4 H(+). The protein operates within sulfur metabolism; hydrogen sulfide biosynthesis; hydrogen sulfide from sulfite (NADPH route): step 1/1. Its function is as follows. Component of the sulfite reductase complex that catalyzes the 6-electron reduction of sulfite to sulfide. This is one of several activities required for the biosynthesis of L-cysteine from sulfate. The flavoprotein component catalyzes the electron flow from NADPH -&gt; FAD -&gt; FMN to the hemoprotein component. This Shewanella oneidensis (strain ATCC 700550 / JCM 31522 / CIP 106686 / LMG 19005 / NCIMB 14063 / MR-1) protein is Sulfite reductase [NADPH] flavoprotein alpha-component.